A 557-amino-acid polypeptide reads, in one-letter code: Ribonuclease J 2 (557 aa).

Zn(2+)-binding residues include His76, His78, His144, and Glu166. 366–370 (HASSH) lines the substrate pocket.

It belongs to the metallo-beta-lactamase superfamily. RNA-metabolizing metallo-beta-lactamase-like family. Bacterial RNase J subfamily. In terms of assembly, homodimer. Component of a possible RNA degradosome complex composed of cshA, eno, pfkA, pnp, rnjA, rnjB, rnpA and rny. Interacts specifically with RNase J1. Zn(2+) is required as a cofactor.

The protein localises to the cytoplasm. Its function is as follows. An RNase that has 5'-3' exonuclease and endonuclease activity, with the exonuclease activity probably being most important in vivo. Involved in maturation of 16S rRNA, rnpB (the RNA component of RNase P) maturation and degradation, and mRNA maturation and/or decay. This subunit probably plays a structural rather than enzymatic role as mutation of its putative active site gives no phenotype, and its deletion is partially complemented by inactive RNase J1. The polypeptide is Ribonuclease J 2 (Staphylococcus aureus (strain NCTC 8325 / PS 47)).